Reading from the N-terminus, the 160-residue chain is uncharacterized protein (160 aa).

This is an uncharacterized protein from Escherichia coli (strain K12).